A 455-amino-acid chain; its full sequence is Peroxisomal membrane protein PEX3 (455 aa).

Positions 113–125 are enriched in polar residues; sequence TVLSDDFSTSQEG. The interval 113-135 is disordered; the sequence is TVLSDDFSTSQEGAISEDTNKPP. A helical membrane pass occupies residues 155 to 171; it reads FLTLIYCESLLIVFLHL.

This sequence belongs to the peroxin-3 family. Component of the peroxisomal docking complex, composed of at least PEX3, PEX13, PEX14 and PEX17. Component of the peroxisomal translocation complex, composed of at least PEX3, PEX2, PEX10 and PEX12. Interacts with PEX19. Interacts with the pexophagy receptor ATG30.

The protein localises to the peroxisome membrane. Peroxisomal membrane protein required for peroxisome biosynthesis. Shared component of both the peroxisomal docking complex and the peroxisomal translocation complex. The two types of peroxisomal matrix targeting signals, PTS1 and PTS2, are first recognized in the cytosol by their receptors PEX5 and PEX7, respectively, which then carry the cargo to the peroxisomal membrane. The peroxisomal targeting signal (PTS) receptor-cargo complexes interact with peroxisomal membrane protein (PMP) components of the docking complex. They have then additional downstream interactions with the translocation complex, leading to the transport of fully folded and oligomerized cargo into the peroxisome matrix. PEX3 acts as an anchoring site for PEX19 on the peroxisomal membrane and thus plays a crucial role in the assembly of the peroxisomal translocation complex. Is also essential for the interaction between the two complexes. Finally. PEX3 activates selective autophagy of peroxisomes (pexophagy) via interaction with the pexophagy receptor ATG30. In Komagataella phaffii (strain GS115 / ATCC 20864) (Yeast), this protein is Peroxisomal membrane protein PEX3.